A 535-amino-acid chain; its full sequence is Transmembrane protein 151 homolog (535 aa).

A run of 3 helical transmembrane segments spans residues 27–47 (GYGKCLICSLLLVLCFFYATY), 73–93 (YNFVPIVFGLMLYIVYLMECW), and 254–274 (PWFLHPIVFWFFSILVLSWPL). Residues 498 to 535 (ASISHSSSKDLKSLTLKNNNGAANNNNNNNNENPEEQP) form a disordered region. The segment covering 510-529 (SLTLKNNNGAANNNNNNNNE) has biased composition (low complexity).

It belongs to the TMEM151 family.

It localises to the membrane. In Caenorhabditis briggsae, this protein is Transmembrane protein 151 homolog.